A 307-amino-acid polypeptide reads, in one-letter code: MLVCVSLLILIHSVPVSPVTVSSRNPKVEVHEFSDAELSCEFKTEKDTNPRIEWKRKDKEKDVSFVYYGERFVGPFQDRADIEGATVRLRRVTQADAGEYRCEVSAPSDSISLGETNVTLRVLVPPQTPSCDVPSSALTGSQVELRCRDRHSIPPAVYTWYKDNRALPIRHPNATYTVNEFTGVLIPQSHYNPGTVCQHCMYHPNYHIPNTQLTTTFQTHDLNVAAVVSAVVLVCVILFLCAFGVCLAHRQGYFSRHRGRSFWIPHCHGVTHISSQNLNPSEHTQHSGYSHPPKEPQDFKHTQSFML.

The N-terminal stretch at 1 to 18 (MLVCVSLLILIHSVPVSP) is a signal peptide. Positions 19-112 (VTVSSRNPKV…EVSAPSDSIS (94 aa)) constitute an Ig-like V-type domain. Residues 19 to 226 (VTVSSRNPKV…FQTHDLNVAA (208 aa)) are Extracellular-facing. 2 cysteine pairs are disulfide-bonded: Cys-40–Cys-102 and Cys-147–Cys-197. One can recognise an Ig-like C2-type domain in the interval 126 to 225 (PQTPSCDVPS…TFQTHDLNVA (100 aa)). The helical transmembrane segment at 227-247 (VVSAVVLVCVILFLCAFGVCL) threads the bilayer. At 248–307 (AHRQGYFSRHRGRSFWIPHCHGVTHISSQNLNPSEHTQHSGYSHPPKEPQDFKHTQSFML) the chain is on the cytoplasmic side. Residues 278–288 (LNPSEHTQHSG) show a composition bias toward polar residues. The segment at 278-307 (LNPSEHTQHSGYSHPPKEPQDFKHTQSFML) is disordered. The span at 292–301 (PPKEPQDFKH) shows a compositional bias: basic and acidic residues.

Belongs to the immunoglobulin superfamily.

The protein resides in the cell membrane. It is found in the cell junction. It localises to the tight junction. Junctional adhesion protein that mediates heterotypic cell-cell interactions to regulate different cellular processes. During myogenesis, it is involved in myocyte fusion through the binding of jam3b on neighboring myocytes. In Danio rerio (Zebrafish), this protein is Junctional adhesion molecule 2A (jam2a).